Reading from the N-terminus, the 666-residue chain is Probable potassium transport system protein Kup (666 aa).

Helical transmembrane passes span 16–36, 58–78, 99–119, 141–161, 167–187, 221–241, 253–273, 292–312, 343–363, 373–393, 402–422, and 424–444; these read GFII…LYTM, ISLI…LVAL, TPWL…DGAL, IFQN…LLFA, TGVI…FLGI, IFIL…YSDL, WPFV…WILA, FTMH…QALI, TYIP…VLLF, YGLA…FFLI, VLLM…ASAV, and FMHG…IMTI.

This sequence belongs to the HAK/KUP transporter (TC 2.A.72) family.

The protein localises to the cell membrane. It carries out the reaction K(+)(in) + H(+)(in) = K(+)(out) + H(+)(out). In terms of biological role, transport of potassium into the cell. Likely operates as a K(+):H(+) symporter. The chain is Probable potassium transport system protein Kup from Streptococcus agalactiae serotype Ia (strain ATCC 27591 / A909 / CDC SS700).